Consider the following 385-residue polypeptide: Mannitol-1-phosphate 5-dehydrogenase (385 aa).

3–14 is a binding site for NAD(+); sequence ALQFGAGNIGRG.

Belongs to the mannitol dehydrogenase family.

It carries out the reaction D-mannitol 1-phosphate + NAD(+) = beta-D-fructose 6-phosphate + NADH + H(+). This chain is Mannitol-1-phosphate 5-dehydrogenase (mtlD), found in Buchnera aphidicola subsp. Acyrthosiphon pisum (strain APS) (Acyrthosiphon pisum symbiotic bacterium).